Consider the following 318-residue polypeptide: Ribose-phosphate pyrophosphokinase 2 (318 aa).

96-101 (RQDKKD) provides a ligand contact to ATP. 4 residues coordinate Mg(2+): aspartate 128, histidine 130, aspartate 139, and aspartate 143. Residue histidine 130 participates in ATP binding. The segment at 212–227 (KDRVAILVDDMADTCG) is binding of phosphoribosylpyrophosphate.

Belongs to the ribose-phosphate pyrophosphokinase family. As to quaternary structure, homodimer. The active form is probably a hexamer composed of 3 homodimers. Requires Mg(2+) as cofactor.

The enzyme catalyses D-ribose 5-phosphate + ATP = 5-phospho-alpha-D-ribose 1-diphosphate + AMP + H(+). It functions in the pathway metabolic intermediate biosynthesis; 5-phospho-alpha-D-ribose 1-diphosphate biosynthesis; 5-phospho-alpha-D-ribose 1-diphosphate from D-ribose 5-phosphate (route I): step 1/1. Activated by magnesium and inorganic phosphate. Competitively or non-competitively inhibited by ADP, 2,3-bisphosphoglyceride or GDP. Its function is as follows. Catalyzes the synthesis of phosphoribosylpyrophosphate (PRPP) that is essential for nucleotide synthesis. The polypeptide is Ribose-phosphate pyrophosphokinase 2 (PRPS2) (Homo sapiens (Human)).